The following is a 228-amino-acid chain: MAAPQDVHVRICNQEIVKFDLEVKALIQDIRDCSGPLSELTELNTKVKEKFQQLKHRIQELEQSAKEQDKESEKQLLLQEVENHKKQMLSNQTSWRKANLTCKLAIDNLEKAELLQGGDSLRQRKTTKESLAQTSSTITESLMGISRMMSQQVQQSEEAMQTLVSSSRTLLDANEEFKSMSGTIQLGRKLITKYNRRELTDKLLIFLALALFLATVLYIVKKRLFPFL.

Over 1–199 the chain is Cytoplasmic; the sequence is MAAPQDVHVR…LITKYNRREL (199 aa). Residues 37 to 90 adopt a coiled-coil conformation; the sequence is LSELTELNTKVKEKFQQLKHRIQELEQSAKEQDKESEKQLLLQEVENHKKQMLS. The helical; Anchor for type IV membrane protein transmembrane segment at 200–220 threads the bilayer; it reads TDKLLIFLALALFLATVLYIV. Residues 221 to 228 lie on the Lumenal side of the membrane; that stretch reads KKRLFPFL.

Belongs to the SEC20 family. Component of a SNARE complex consisting of STX18, USE1L, BNIP1/SEC20L and SEC22B. Interacts directly with STX18, RINT1/TIP20L and NAPA. Interacts with ZW10 through RINT1. Interacts with BCL2. Interacts with RNF186. Interacts with RNF185. Interacts with SQSTM1; increased by 'Lys-63'-linked polyubiquitination of BNIP1. In terms of processing, polyubiquitinated. 'Lys-63'-linked polyubiquitination by RNF185 increases the interaction with the autophagy receptor SQSTM1. Undergoes 'Lys-29'- and 'Lys-63'-linked polyubiquitination by RNF186 that may regulate BNIP1 localization to the mitochondrion.

The protein localises to the endoplasmic reticulum membrane. The protein resides in the mitochondrion membrane. In terms of biological role, as part of a SNARE complex may be involved in endoplasmic reticulum membranes fusion and be required for the maintenance of endoplasmic reticulum organization. Also plays a role in apoptosis. It is for instance required for endoplasmic reticulum stress-induced apoptosis. As a substrate of RNF185 interacting with SQSTM1, might also be involved in mitochondrial autophagy. This is Vesicle transport protein SEC20 from Rattus norvegicus (Rat).